The following is a 947-amino-acid chain: Serine-aspartate repeat-containing protein C (947 aa).

The N-terminal stretch at Met1–Ala50 is a signal peptide. Residues Ala51 to Lys164 are disordered. The segment at Ala51–Lys495 is ligand binding A region. Residues Gly56–Asn71 are compositionally biased toward polar residues. The segment covering Lys72–Lys83 has biased composition (basic and acidic residues). Over residues Asp84 to Ser155 the composition is skewed to polar residues. 2 consecutive CNA-B domains span residues Lys496–Pro606 and Lys607–Thr717. Positions Thr678–Gly927 are disordered. Acidic residues-rich tracts occupy residues Thr685–Glu695 and Tyr712–Ser886. Residues Leu910–Gly914 carry the LPXTG sorting signal motif. A compositionally biased stretch (low complexity) spans Glu912–Gly927. Thr913 is subject to Pentaglycyl murein peptidoglycan amidated threonine. The propeptide at Gly914 to Lys947 is removed by sortase.

The protein belongs to the serine-aspartate repeat-containing protein (SDr) family. In terms of assembly, homodimerizes; via N2-Domain. Interacts with host NRXN1; this interaction mediates bacterial attachment to host cells.

It is found in the secreted. Its subcellular location is the cell wall. In terms of biological role, cell surface-associated calcium-binding protein which plays an important role in adhesion and pathogenesis. Mediates interactions with components of the extracellular matrix such as host NRXN1 to promote bacterial adhesion. The chain is Serine-aspartate repeat-containing protein C (sdrC) from Staphylococcus aureus (strain COL).